We begin with the raw amino-acid sequence, 237 residues long: MTDSYKLPDNPGDPDATDDEGIHPDEVENLIEEAERTQGGSEDDDLLTTEPDPVVDAREDDRDPTLEEDLEGDLQAVLDDIDAELGVADTPEATGDLPTTEAQLAERTEDLQRVTAEYANYRRRTERERAGIIDTAKSGVVSKLLPILDDLDLAEQHGDLEEGPLKAFADKFRNTLTGLKVEAFGVPGDTFDPEIHEAVQDLSEGDTKVLGTVLRKGYRFNDKLIRNAMVIIADPEK.

The tract at residues 1 to 65 is disordered; the sequence is MTDSYKLPDN…DAREDDRDPT (65 aa). The segment covering 55 to 65 has biased composition (basic and acidic residues); it reads VDAREDDRDPT.

This sequence belongs to the GrpE family. In terms of assembly, homodimer.

The protein localises to the cytoplasm. In terms of biological role, participates actively in the response to hyperosmotic and heat shock by preventing the aggregation of stress-denatured proteins, in association with DnaK and GrpE. It is the nucleotide exchange factor for DnaK and may function as a thermosensor. Unfolded proteins bind initially to DnaJ; upon interaction with the DnaJ-bound protein, DnaK hydrolyzes its bound ATP, resulting in the formation of a stable complex. GrpE releases ADP from DnaK; ATP binding to DnaK triggers the release of the substrate protein, thus completing the reaction cycle. Several rounds of ATP-dependent interactions between DnaJ, DnaK and GrpE are required for fully efficient folding. The sequence is that of Protein GrpE from Corynebacterium efficiens (strain DSM 44549 / YS-314 / AJ 12310 / JCM 11189 / NBRC 100395).